The primary structure comprises 438 residues: GTPase Obg (438 aa).

An Obg domain is found at 1 to 159 (MAFRDVLNIE…RRVRLELRLI (159 aa)). The region spanning 160–332 (ADVGLVGYPN…LRETLFQLLP (173 aa)) is the OBG-type G domain. ATP contacts are provided by residues 166-173 (GYPNAGKS), 191-195 (FTTLS), 219-222 (DIPG), 285-288 (NKVE), and 313-315 (SAK). Mg(2+) contacts are provided by Ser173 and Thr193. In terms of domain architecture, OCT spans 357–435 (IVFREDAPAK…IGTFRFEYFD (79 aa)).

This sequence belongs to the TRAFAC class OBG-HflX-like GTPase superfamily. OBG GTPase family. In terms of assembly, monomer. Mg(2+) serves as cofactor.

It localises to the cytoplasm. Functionally, an essential GTPase which binds GTP, GDP and possibly (p)ppGpp with moderate affinity, with high nucleotide exchange rates and a fairly low GTP hydrolysis rate. Plays a role in control of the cell cycle, stress response, ribosome biogenesis and in those bacteria that undergo differentiation, in morphogenesis control. The chain is GTPase Obg from Deinococcus radiodurans (strain ATCC 13939 / DSM 20539 / JCM 16871 / CCUG 27074 / LMG 4051 / NBRC 15346 / NCIMB 9279 / VKM B-1422 / R1).